We begin with the raw amino-acid sequence, 452 residues long: Diphthine methyltransferase (452 aa).

WD repeat units lie at residues 79 to 130 (PLVE…SHVL), 131 to 185 (EPLS…RPRL), 186 to 229 (QKVA…RVPG), 230 to 273 (KFLF…RNMK), 274 to 313 (QPLA…LNCQ), 314 to 403 (KAME…TEGM), and 404 to 448 (RKNG…HLWE). Ser353 carries the post-translational modification Phosphoserine. The disordered stretch occupies residues 371-402 (SELPTPCHECREDNDGEGHARPQSGMKPLTEG). Over residues 378–390 (HECREDNDGEGHA) the composition is skewed to basic and acidic residues.

Belongs to the DPH7 family. In terms of assembly, interacts with INCA1.

The enzyme catalyses diphthine methyl ester-[translation elongation factor 2] + H2O = diphthine-[translation elongation factor 2] + methanol + H(+). The protein operates within protein modification; peptidyl-diphthamide biosynthesis. Catalyzes the demethylation of diphthine methyl ester to form diphthine, an intermediate diphthamide biosynthesis, a post-translational modification of histidine which occurs in translation elongation factor 2 (EEF2) which can be ADP-ribosylated by diphtheria toxin and by Pseudomonas exotoxin A (Eta). This is Diphthine methyltransferase (DPH7) from Homo sapiens (Human).